A 494-amino-acid chain; its full sequence is Glycosyl hydrolase family 109 protein (494 aa).

2 disordered regions span residues 1-35 (MNDA…LRTT) and 59-86 (EAAQ…MAGV). Positions 1 to 55 (MNDAAPQNPGQDEAKGTGEKDNGGSMSPRSALRTTAGVAGAGLGLSALGTGTASA) form a signal peptide, tat-type signal. The segment covering 12–22 (DEAKGTGEKDN) has biased composition (basic and acidic residues). NAD(+) is bound by residues 103-104 (NR), D125, 174-177 (WDFH), 194-195 (EC), and N223. Residues Y252, R271, 283-286 (YPNH), and Y365 contribute to the substrate site. Y283 provides a ligand contact to NAD(+). The segment at 463-494 (KANGKPQQIPDFTRGEWKKSRPGTDSEKPSEP) is disordered. The span at 475–494 (TRGEWKKSRPGTDSEKPSEP) shows a compositional bias: basic and acidic residues.

It belongs to the Gfo/Idh/MocA family. Glycosyl hydrolase 109 subfamily. Requires NAD(+) as cofactor. In terms of processing, predicted to be exported by the Tat system. The position of the signal peptide cleavage has not been experimentally proven.

Functionally, glycosidase. In Streptomyces niveus (Streptomyces spheroides), this protein is Glycosyl hydrolase family 109 protein.